Consider the following 212-residue polypeptide: Glycerol-3-phosphate acyltransferase (212 aa).

Transmembrane regions (helical) follow at residues 5-25, 53-73, 80-100, 112-132, and 138-158; these read ALGM…ILVC, VAAA…VWLA, PLYL…PVFF, FGAI…TWLL, and GYSS…VWWF.

The protein belongs to the PlsY family. In terms of assembly, probably interacts with PlsX.

The protein resides in the cell inner membrane. The catalysed reaction is an acyl phosphate + sn-glycerol 3-phosphate = a 1-acyl-sn-glycero-3-phosphate + phosphate. It participates in lipid metabolism; phospholipid metabolism. In terms of biological role, catalyzes the transfer of an acyl group from acyl-phosphate (acyl-PO(4)) to glycerol-3-phosphate (G3P) to form lysophosphatidic acid (LPA). This enzyme utilizes acyl-phosphate as fatty acyl donor, but not acyl-CoA or acyl-ACP. This chain is Glycerol-3-phosphate acyltransferase, found in Serratia proteamaculans (strain 568).